The primary structure comprises 299 residues: MLSAGLGLLMLVAVVEFLIGLIGNGVLVVWSFREWIRKFSWSSYNLIILGLAGCRFVLQWLIILDLSLFPLFQSSRWLRYLSIFWVLVSQASLWFATFLSVFYCKKITTFDHPAYLWLKQRAYNLSLWCLLGYFIINLLLTVQIGLMFYHPPQGNSSIRYPFESWQYLYAFRLNSGSYLPLMVFLVSSGMLIVSLYTHHKKMKVHSAGRRDVRAKAHITALKSLGCFLLLHLVYIMASPFSIASKTYPPDLTSVFIWETLMAAYPSLHSLILIMGIPRVKQTCQKILWKTVCARRCWGP.

Methionine 1 is a topological domain (extracellular). Residues 2 to 22 (LSAGLGLLMLVAVVEFLIGLI) form a helical membrane-spanning segment. Residues 23–45 (GNGVLVVWSFREWIRKFSWSSYN) lie on the Cytoplasmic side of the membrane. The chain crosses the membrane as a helical span at residues 46-66 (LIILGLAGCRFVLQWLIILDL). Topologically, residues 67-82 (SLFPLFQSSRWLRYLS) are extracellular. A helical membrane pass occupies residues 83–103 (IFWVLVSQASLWFATFLSVFY). The Cytoplasmic portion of the chain corresponds to 104–127 (CKKITTFDHPAYLWLKQRAYNLSL). Residues 128–148 (WCLLGYFIINLLLTVQIGLMF) form a helical membrane-spanning segment. Over 149–175 (YHPPQGNSSIRYPFESWQYLYAFRLNS) the chain is Extracellular. A glycan (N-linked (GlcNAc...) asparagine) is linked at asparagine 155. Residues 176–196 (GSYLPLMVFLVSSGMLIVSLY) traverse the membrane as a helical segment. Residues 197–223 (THHKKMKVHSAGRRDVRAKAHITALKS) are Cytoplasmic-facing. The helical transmembrane segment at 224-244 (LGCFLLLHLVYIMASPFSIAS) threads the bilayer. At 245 to 253 (KTYPPDLTS) the chain is on the extracellular side. Residues 254–274 (VFIWETLMAAYPSLHSLILIM) traverse the membrane as a helical segment. Residues 275–299 (GIPRVKQTCQKILWKTVCARRCWGP) are Cytoplasmic-facing.

Belongs to the G-protein coupled receptor T2R family.

The protein resides in the membrane. Functionally, receptor that may play a role in the perception of bitterness and is gustducin-linked. May play a role in sensing the chemical composition of the gastrointestinal content. The activity of this receptor may stimulate alpha gustducin, mediate PLC-beta-2 activation and lead to the gating of TRPM5. This is Taste receptor type 2 member 5 (TAS2R5) from Pan paniscus (Pygmy chimpanzee).